The primary structure comprises 328 residues: Methionyl-tRNA formyltransferase (328 aa).

110–113 (SLLP) contacts (6S)-5,6,7,8-tetrahydrofolate.

It belongs to the Fmt family.

The catalysed reaction is L-methionyl-tRNA(fMet) + (6R)-10-formyltetrahydrofolate = N-formyl-L-methionyl-tRNA(fMet) + (6S)-5,6,7,8-tetrahydrofolate + H(+). Its function is as follows. Attaches a formyl group to the free amino group of methionyl-tRNA(fMet). The formyl group appears to play a dual role in the initiator identity of N-formylmethionyl-tRNA by promoting its recognition by IF2 and preventing the misappropriation of this tRNA by the elongation apparatus. This is Methionyl-tRNA formyltransferase from Prochlorococcus marinus (strain MIT 9515).